Consider the following 302-residue polypeptide: Phosphoribosylaminoimidazole-succinocarboxamide synthase (302 aa).

Belongs to the SAICAR synthetase family.

It carries out the reaction 5-amino-1-(5-phospho-D-ribosyl)imidazole-4-carboxylate + L-aspartate + ATP = (2S)-2-[5-amino-1-(5-phospho-beta-D-ribosyl)imidazole-4-carboxamido]succinate + ADP + phosphate + 2 H(+). The protein operates within purine metabolism; IMP biosynthesis via de novo pathway; 5-amino-1-(5-phospho-D-ribosyl)imidazole-4-carboxamide from 5-amino-1-(5-phospho-D-ribosyl)imidazole-4-carboxylate: step 1/2. The protein is Phosphoribosylaminoimidazole-succinocarboxamide synthase of Ralstonia nicotianae (strain ATCC BAA-1114 / GMI1000) (Ralstonia solanacearum).